The sequence spans 322 residues: Phosphatidylserine decarboxylase proenzyme (322 aa).

Catalysis depends on charge relay system; for autoendoproteolytic cleavage activity residues Asp-90, His-147, and Ser-254. Ser-254 (schiff-base intermediate with substrate; via pyruvic acid; for decarboxylase activity) is an active-site residue. A Pyruvic acid (Ser); by autocatalysis modification is found at Ser-254. The interval 293 to 322 is disordered; that stretch reads PDAEPAPLPAEEIEAEHDASPLVDDKKDQV. Positions 308 to 322 are enriched in basic and acidic residues; the sequence is EHDASPLVDDKKDQV.

This sequence belongs to the phosphatidylserine decarboxylase family. PSD-B subfamily. Prokaryotic type I sub-subfamily. As to quaternary structure, heterodimer of a large membrane-associated beta subunit and a small pyruvoyl-containing alpha subunit. The cofactor is pyruvate. In terms of processing, is synthesized initially as an inactive proenzyme. Formation of the active enzyme involves a self-maturation process in which the active site pyruvoyl group is generated from an internal serine residue via an autocatalytic post-translational modification. Two non-identical subunits are generated from the proenzyme in this reaction, and the pyruvate is formed at the N-terminus of the alpha chain, which is derived from the carboxyl end of the proenzyme. The autoendoproteolytic cleavage occurs by a canonical serine protease mechanism, in which the side chain hydroxyl group of the serine supplies its oxygen atom to form the C-terminus of the beta chain, while the remainder of the serine residue undergoes an oxidative deamination to produce ammonia and the pyruvoyl prosthetic group on the alpha chain. During this reaction, the Ser that is part of the protease active site of the proenzyme becomes the pyruvoyl prosthetic group, which constitutes an essential element of the active site of the mature decarboxylase.

Its subcellular location is the cell membrane. The enzyme catalyses a 1,2-diacyl-sn-glycero-3-phospho-L-serine + H(+) = a 1,2-diacyl-sn-glycero-3-phosphoethanolamine + CO2. It functions in the pathway phospholipid metabolism; phosphatidylethanolamine biosynthesis; phosphatidylethanolamine from CDP-diacylglycerol: step 2/2. Functionally, catalyzes the formation of phosphatidylethanolamine (PtdEtn) from phosphatidylserine (PtdSer). The sequence is that of Phosphatidylserine decarboxylase proenzyme from Escherichia coli (strain 55989 / EAEC).